We begin with the raw amino-acid sequence, 442 residues long: tRNA modification GTPase MnmE (442 aa).

(6S)-5-formyl-5,6,7,8-tetrahydrofolate is bound by residues arginine 27, glutamate 84, and lysine 124. One can recognise a TrmE-type G domain in the interval 221 to 366 (GLHVVIVGAP…LLDALQAFAE (146 aa)). Residues 231-236 (NAGKSS), 250-256 (SEEAGTT), and 275-278 (DTAG) contribute to the GTP site. Mg(2+) is bound by residues serine 235 and threonine 256. Lysine 442 lines the (6S)-5-formyl-5,6,7,8-tetrahydrofolate pocket.

This sequence belongs to the TRAFAC class TrmE-Era-EngA-EngB-Septin-like GTPase superfamily. TrmE GTPase family. Homodimer. Heterotetramer of two MnmE and two MnmG subunits. K(+) is required as a cofactor.

The protein localises to the cytoplasm. In terms of biological role, exhibits a very high intrinsic GTPase hydrolysis rate. Involved in the addition of a carboxymethylaminomethyl (cmnm) group at the wobble position (U34) of certain tRNAs, forming tRNA-cmnm(5)s(2)U34. This chain is tRNA modification GTPase MnmE, found in Brucella melitensis biotype 1 (strain ATCC 23456 / CCUG 17765 / NCTC 10094 / 16M).